The following is a 408-amino-acid chain: uncharacterized protein (408 aa).

The segment covering 376–386 (NELNDPNSVYN) has biased composition (polar residues). The disordered stretch occupies residues 376 to 408 (NELNDPNSVYNSPEFDHQGDQKKLTEENGCVVQ). Over residues 389–401 (EFDHQGDQKKLTE) the composition is skewed to basic and acidic residues.

This is an uncharacterized protein from Acanthamoeba polyphaga (Amoeba).